We begin with the raw amino-acid sequence, 471 residues long: Glutamate--tRNA ligase (471 aa).

A 'HIGH' region motif is present at residues 9–19 (PSPTGYLHVGG). Residues C98, C100, C125, and H127 each contribute to the Zn(2+) site. Positions 237–241 (KLSKR) match the 'KMSKS' region motif. K240 contacts ATP.

It belongs to the class-I aminoacyl-tRNA synthetase family. Glutamate--tRNA ligase type 1 subfamily. As to quaternary structure, monomer. The cofactor is Zn(2+).

The protein localises to the cytoplasm. It catalyses the reaction tRNA(Glu) + L-glutamate + ATP = L-glutamyl-tRNA(Glu) + AMP + diphosphate. Functionally, catalyzes the attachment of glutamate to tRNA(Glu) in a two-step reaction: glutamate is first activated by ATP to form Glu-AMP and then transferred to the acceptor end of tRNA(Glu). The protein is Glutamate--tRNA ligase of Shigella boydii serotype 4 (strain Sb227).